The chain runs to 657 residues: Methyl-accepting chemotaxis protein CtpL (657 aa).

The Cytoplasmic segment spans residues 1 to 5 (MRLKQ). The helical transmembrane segment at 6–26 (LTNLNTLLLLTVCLALGITLW) threads the bilayer. The Periplasmic segment spans residues 27–305 (WSQRAMERPF…ERQRLQGQVR (279 aa)). A helical transmembrane segment spans residues 306–326 (LIQGGMIALILLIALAIDSLQ). Positions 327 to 380 (RRLARVLGQLVPALSAWADGDFSRPISLRTRTEDLRNLEDSLNRLRSFLAELVG) constitute an HAMP domain. Over 327–657 (RRLARVLGQL…LRTTVQAFRL (331 aa)) the chain is Cytoplasmic. The region spanning 385–621 (RAEQVAGSSQ…EIRSHSERIH (237 aa)) is the Methyl-accepting transducer domain.

The protein belongs to the methyl-accepting chemotaxis (MCP) protein family.

The protein resides in the cell inner membrane. Chemotactic-signal transducers respond to changes in the concentration of attractants and repellents in the environment, transduce a signal from the outside to the inside of the cell, and facilitate sensory adaptation through the variation of the level of methylation. Chemoreceptor for inorganic phosphate, which is required for taxis at low concentrations of phosphate. Is also responsible for the positive chemotaxis toward 4-chloroaniline (4CA) and catechol. Does not recognize inorganic phosphate directly, but via a complex between the periplasmic protein PstS and inorganic phosphate. The chain is Methyl-accepting chemotaxis protein CtpL from Pseudomonas aeruginosa (strain ATCC 15692 / DSM 22644 / CIP 104116 / JCM 14847 / LMG 12228 / 1C / PRS 101 / PAO1).